We begin with the raw amino-acid sequence, 122 residues long: Glycine cleavage system H protein (122 aa).

Residues threonine 19–lysine 101 enclose the Lipoyl-binding domain. Residue lysine 60 is modified to N6-lipoyllysine.

This sequence belongs to the GcvH family. As to quaternary structure, the glycine cleavage system is composed of four proteins: P, T, L and H. (R)-lipoate serves as cofactor.

The glycine cleavage system catalyzes the degradation of glycine. The H protein shuttles the methylamine group of glycine from the P protein to the T protein. In Dinoroseobacter shibae (strain DSM 16493 / NCIMB 14021 / DFL 12), this protein is Glycine cleavage system H protein.